Here is a 1331-residue protein sequence, read N- to C-terminus: MAAAWLGWLLWALLLSAAQGELYTPKHEAGVCTFYEECGKNPELSGGLTSLSNVSCLSNTPARHVTGEHLALLQRICPRLYNGPNTTFACCSTKQLLSLESSMSITKALLTRCPACSDNFVSLHCHNTCSPDQSLFINVTRVVERGAGEPPAVVAYEAFYQRSFAEKAYESCSQVRIPAAASLAVGSMCGVYGSALCNAQRWLNFQGDTGNGLAPLDITFHLLEPGQALPDGIQPLNGKIAPCNESQGDDSAVCSCQDCAASCPVIPPPEALRPSFYMGRMPGWLALIIIFTAVFVLLSAVLVRLRVVSNRNKNKAEGPQEAPKLPHKHKLSPHTILGRFFQNWGTRVASWPLTVLALSFIVVIALAAGLTFIELTTDPVELWSAPKSQARKEKSFHDEHFGPFFRTNQIFVTARNRSSYKYDSLLLGSKNFSGILSLDFLLELLELQERLRHLQVWSPEAERNISLQDICYAPLNPYNTSLSDCCVNSLLQYFQNNRTLLMLTANQTLNGQTSLVDWKDHFLYCANAPLTFKDGTSLALSCMADYGAPVFPFLAVGGYQGTDYSEAEALIITFSLNNYPADDPRMAQAKLWEEAFLKEMESFQRNTSDKFQVAFSAERSLEDEINRTTIQDLPVFAVSYIIVFLYISLALGSYSRCSRVAVESKATLGLGGVIVVLGAVLAAMGFYSYLGVPSSLVIIQVVPFLVLAVGADNIFIFVLEYQRLPRMPGEQREAHIGRTLGSVAPSMLLCSLSEAICFFLGALTPMPAVRTFALTSGLAIILDFLLQMTAFVALLSLDSKRQEASRPDVLCCFSTRKLPPPKEKEGLLLRFFRKIYAPFLLHRFIRPVVMLLFLTLFGANLYLMCNINVGLDQELALPKDSYLIDYFLFLNRYLEVGPPVYFVTTSGFNFSSEAGMNATCSSAGCKSFSLTQKIQYASEFPDQSYVAIAASSWVDDFIDWLTPSSSCCRLYIRGPHKDEFCPSTDTSFNCLKNCMNRTLGPVRPTAEQFHKYLPWFLNDPPNIRCPKGGLAAYRTSVNLSSDGQVIASQFMAYHKPLRNSQDFTEALRASRLLAANITADLRKVPGTDPNFEVFPYTISNVFYQQYLTVLPEGIFTLALCFVPTFVVCYLLLGLDMCSGILNLLSIIMILVDTIGLMAVWGISYNAVSLINLVTAVGMSVEFVSHITRSFAVSTKPTRLERAKDATVFMGSAVFAGVAMTNFPGILILGFAQAQLIQIFFFRLNLLITLLGLLHGLVFLPVVLSYLGPDVNQALVQEEKLASEAAVAPEPSCPQYPSPADADANVNYGFAPELAHGANAARSSLPKSDQKF.

The N-terminal stretch at 1-20 is a signal peptide; it reads MAAAWLGWLLWALLLSAAQG. The Extracellular segment spans residues 21–282; that stretch reads ELYTPKHEAG…RPSFYMGRMP (262 aa). Cystine bridges form between Cys32–Cys90, Cys38–Cys56, Cys77–Cys125, Cys91–Cys129, Cys113–Cys254, Cys116–Cys172, Cys189–Cys197, Cys243–Cys259, and Cys256–Cys263. N-linked (GlcNAc...) asparagine glycosylation is found at Asn53 and Asn85. A glycan (N-linked (GlcNAc...) asparagine) is linked at Asn138. Asn244 is a glycosylation site (N-linked (GlcNAc...) asparagine). A helical membrane pass occupies residues 283–303; it reads GWLALIIIFTAVFVLLSAVLV. At 304-352 the chain is on the cytoplasmic side; that stretch reads RLRVVSNRNKNKAEGPQEAPKLPHKHKLSPHTILGRFFQNWGTRVASWP. Residues 353 to 373 form a helical membrane-spanning segment; the sequence is LTVLALSFIVVIALAAGLTFI. Residues 374-632 are Extracellular-facing; sequence ELTTDPVELW…DEINRTTIQD (259 aa). 6 N-linked (GlcNAc...) asparagine glycosylation sites follow: Asn416, Asn431, Asn464, Asn479, Asn497, and Asn506. Cysteines 471 and 485 form a disulfide. Cysteines 525 and 542 form a disulfide. Asn606 and Asn626 each carry an N-linked (GlcNAc...) asparagine glycan. An SSD domain is found at 632 to 797; the sequence is DLPVFAVSYI…MTAFVALLSL (166 aa). Residues 633–653 traverse the membrane as a helical segment; sequence LPVFAVSYIIVFLYISLALGS. Residues 654–665 lie on the Cytoplasmic side of the membrane; it reads YSRCSRVAVESK. Residues 666 to 686 form a helical membrane-spanning segment; sequence ATLGLGGVIVVLGAVLAAMGF. The Extracellular portion of the chain corresponds to 687–696; sequence YSYLGVPSSL. The helical transmembrane segment at 697 to 717 threads the bilayer; the sequence is VIIQVVPFLVLAVGADNIFIF. Topologically, residues 718-742 are cytoplasmic; it reads VLEYQRLPRMPGEQREAHIGRTLGS. Residues 743–763 traverse the membrane as a helical segment; it reads VAPSMLLCSLSEAICFFLGAL. The Extracellular segment spans residues 764–776; that stretch reads TPMPAVRTFALTS. Residues 777-797 form a helical membrane-spanning segment; that stretch reads GLAIILDFLLQMTAFVALLSL. Residues 798–846 are Cytoplasmic-facing; the sequence is DSKRQEASRPDVLCCFSTRKLPPPKEKEGLLLRFFRKIYAPFLLHRFIR. A helical transmembrane segment spans residues 847 to 867; the sequence is PVVMLLFLTLFGANLYLMCNI. Over 868–1113 the chain is Extracellular; the sequence is NVGLDQELAL…QQYLTVLPEG (246 aa). N-linked (GlcNAc...) asparagine glycans are attached at residues Asn909 and Asn917. 3 disulfide bridges follow: Cys920-Cys925, Cys967-Cys1025, and Cys981-Cys990. Residues Asn996, Asn1038, and Asn1076 are each glycosylated (N-linked (GlcNAc...) asparagine). Residues 1114–1134 traverse the membrane as a helical segment; it reads IFTLALCFVPTFVVCYLLLGL. Topologically, residues 1135–1142 are cytoplasmic; that stretch reads DMCSGILN. A helical membrane pass occupies residues 1143–1163; the sequence is LLSIIMILVDTIGLMAVWGIS. Residues 1164-1165 are Extracellular-facing; it reads YN. A helical transmembrane segment spans residues 1166-1186; sequence AVSLINLVTAVGMSVEFVSHI. At 1187–1206 the chain is on the cytoplasmic side; sequence TRSFAVSTKPTRLERAKDAT. Residues 1207–1227 traverse the membrane as a helical segment; it reads VFMGSAVFAGVAMTNFPGILI. Topologically, residues 1228–1242 are extracellular; sequence LGFAQAQLIQIFFFR. The helical transmembrane segment at 1243 to 1263 threads the bilayer; it reads LNLLITLLGLLHGLVFLPVVL. Topologically, residues 1264–1331 are cytoplasmic; it reads SYLGPDVNQA…SSLPKSDQKF (68 aa).

The protein belongs to the patched family. In terms of assembly, interacts with RAB11A, MYO5B and RAB11FIP2. Interaction with RAB11A, MYO5B and RAB11FIP2 is required for proper transport to the plasma membrane upon cholesterol depletion. Interacts with NPC2. Interacts with LIMA1. In terms of processing, highly glycosylated. Small intestine showed the highest level of expression. Expression in other tissues including gall bladder, liver, testis and stomach is also observed. Along the duodenum-ileum axis, the levels vary in different segments of the intestine with peak expression in the proximal jejunum. Protein expression is confined to the enterocyte. Discrete localization to the epithelial layer bordering the luminal space along the crypt-villus axis. Protein expression in the enterocyte is observed closest to the luminal space. Expression in enterocytes from the proximal (jejunum) but not in the distal (ileum) region.

It is found in the apical cell membrane. The protein resides in the cell membrane. It catalyses the reaction cholesterol(in) = cholesterol(out). It carries out the reaction sitosterol(out) = sitosterol(in). Plays a major role in cholesterol homeostasis. Critical for the uptake of cholesterol across the plasma membrane of the intestinal enterocyte. Involved in plant sterol absorption, it transports sitosterol, although at lower rates than cholesterol. Is the direct molecular target of ezetimibe, a drug that inhibits cholesterol absorption and is approved for the treatment of hypercholesterolemia. May have a function in the transport of multiple lipids and their homeostasis, thereby influencing lipid metabolism regulation. May be involved in caveolin trafficking from the plasma membrane. Acts as a negative regulator of NPC2 and down-regulates its expression and secretion by inhibiting its maturation and accelerating its degradation. This Rattus norvegicus (Rat) protein is NPC1-like intracellular cholesterol transporter 1.